Reading from the N-terminus, the 116-residue chain is Protein Rev (116 aa).

A phosphoserine; by host CK2 mark is found at Ser-5 and Ser-8. The homomultimerization stretch occupies residues 18 to 26 (LIKILYQSN). The tract at residues 26–50 (NPYPKPNGSRQARRNRRRRWRARQN) is disordered. Positions 34–50 (SRQARRNRRRRWRARQN) match the Nuclear localization signal and RNA-binding (RRE) motif. A compositionally biased stretch (basic residues) spans 36 to 47 (QARRNRRRRWRA). A Nuclear export signal and binding to XPO1 motif is present at residues 73–84 (LQLPPIERLRLD). Positions 91–116 (NSGTQGVGDPQISGEPCMVLGAGTKE) are disordered. At Ser-92 the chain carries Phosphoserine; by host.

It belongs to the HIV-1 REV protein family. Homomultimer; when bound to the RRE. Multimeric assembly is essential for activity and may involve XPO1. Binds to human KPNB1, XPO1, TNPO1, RANBP5 and IPO7. Interacts with the viral Integrase. Interacts with human KHDRBS1. Interacts with human NAP1; this interaction decreases Rev multimerization and stimulates its activity. Interacts with human DEAD-box helicases DDX3 and DDX24; these interactions may serve for viral RNA export to the cytoplasm and packaging, respectively. Interacts with human PSIP1; this interaction may inhibit HIV-1 DNA integration by promoting dissociation of the Integrase-LEDGF/p75 complex. Post-translationally, asymmetrically arginine dimethylated at one site by host PRMT6. Methylation impairs the RNA-binding activity and export of viral RNA from the nucleus to the cytoplasm. In terms of processing, phosphorylated by protein kinase CK2. Presence of, and maybe binding to the N-terminus of the regulatory beta subunit of CK2 is necessary for CK2-mediated Rev's phosphorylation.

Its subcellular location is the host nucleus. The protein localises to the host nucleolus. It localises to the host cytoplasm. Its function is as follows. Escorts unspliced or incompletely spliced viral pre-mRNAs (late transcripts) out of the nucleus of infected cells. These pre-mRNAs carry a recognition sequence called Rev responsive element (RRE) located in the env gene, that is not present in fully spliced viral mRNAs (early transcripts). This function is essential since most viral proteins are translated from unspliced or partially spliced pre-mRNAs which cannot exit the nucleus by the pathway used by fully processed cellular mRNAs. Rev itself is translated from a fully spliced mRNA that readily exits the nucleus. Rev's nuclear localization signal (NLS) binds directly to KPNB1/Importin beta-1 without previous binding to KPNA1/Importin alpha-1. KPNB1 binds to the GDP bound form of RAN (Ran-GDP) and targets Rev to the nucleus. In the nucleus, the conversion from Ran-GDP to Ran-GTP dissociates Rev from KPNB1 and allows Rev's binding to the RRE in viral pre-mRNAs. Rev multimerization on the RRE via cooperative assembly exposes its nuclear export signal (NES) to the surface. Rev can then form a complex with XPO1/CRM1 and Ran-GTP, leading to nuclear export of the complex. Conversion from Ran-GTP to Ran-GDP mediates dissociation of the Rev/RRE/XPO1/RAN complex, so that Rev can return to the nucleus for a subsequent round of export. Beside KPNB1, also seems to interact with TNPO1/Transportin-1, RANBP5/IPO5 and IPO7/RANBP7 for nuclear import. The nucleoporin-like HRB/RIP is an essential cofactor that probably indirectly interacts with Rev to release HIV RNAs from the perinuclear region to the cytoplasm. The protein is Protein Rev of Homo sapiens (Human).